The following is a 196-amino-acid chain: Baseplate wedge protein gp53 (196 aa).

In terms of assembly, part of the baseplate macromolecular complex which consists of gp5, gp5.4, gp27 (central spike complex); gp6, gp25, gp53 (inner baseplate); gp7, gp8 (intermediate baseplate); gp9, gp10, gp11, gp12 (peripheral); gp48 and gp54 (proximal region of the tail tube). Interacts with gp25 and with the (gp6)2-gp7 heterotrimeric molecule.

The protein localises to the virion. Functionally, baseplate protein that is located next to the tail tube (inner baseplate). Involved in the tail assembly. Involved in the tail assembly. The protein is Baseplate wedge protein gp53 (53) of Enterobacteria phage T4 (Bacteriophage T4).